The following is an 89-amino-acid chain: U-scoloptoxin(11)-Sm4a (89 aa).

The N-terminal stretch at 1–17 (MFFKLVLVSAVAIQALS) is a signal peptide.

This sequence belongs to the scoloptoxin-11 family. Contains 3 disulfide bonds. Expressed by the venom gland.

It localises to the secreted. This chain is U-scoloptoxin(11)-Sm4a, found in Scolopendra morsitans (Tanzanian blue ringleg centipede).